Consider the following 907-residue polypeptide: Lipoxygenase 1, chloroplastic (907 aa).

Residues 1–49 (MALAKQIMGASLMDQKTSVFGSNLCLNHVLVNKHRLRLRKTRKNGSMVV) constitute a chloroplast transit peptide. Residues 85-209 (DFFKDTIFRK…DLPNPRIFFT (125 aa)) enclose the PLAT domain. Residues 212–907 (PYLPDETPVG…CRGVPNSISI (696 aa)) enclose the Lipoxygenase domain. The Fe cation site is built by histidine 567, histidine 572, histidine 758, asparagine 762, and isoleucine 907.

Belongs to the lipoxygenase family. It depends on Fe cation as a cofactor. Confined to glandular trichomes in flowers, and, at low levels, in leaves.

The protein localises to the plastid. It is found in the chloroplast. The enzyme catalyses (9Z,12Z,15Z)-octadecatrienoate + O2 = 13-hydroperoxy-(9Z,11E,15Z)-octadecatrienoate. It participates in lipid metabolism; oxylipin biosynthesis. The protein operates within isoprenoid biosynthesis. Component of the monoterpenoid pyrethrins biosynthesis; pyrethrins are widely used plant-derived pesticide. Plant lipoxygenases may be involved in a number of diverse aspects of plant physiology including growth and development, pest resistance, and senescence or responses to wounding. Catalyzes the hydroperoxidation of lipids containing a cis,cis-1,4-pentadiene structure. Mediates the peroxidation of linolenic acid leading to the production of 13-hydroperoxylinolenic acid. The protein is Lipoxygenase 1, chloroplastic of Tanacetum cinerariifolium (Dalmatian daisy).